The chain runs to 118 residues: Ribosome-binding factor A (118 aa).

Belongs to the RbfA family. Monomer. Binds 30S ribosomal subunits, but not 50S ribosomal subunits or 70S ribosomes.

The protein localises to the cytoplasm. In terms of biological role, one of several proteins that assist in the late maturation steps of the functional core of the 30S ribosomal subunit. Associates with free 30S ribosomal subunits (but not with 30S subunits that are part of 70S ribosomes or polysomes). Required for efficient processing of 16S rRNA. May interact with the 5'-terminal helix region of 16S rRNA. This chain is Ribosome-binding factor A, found in Clostridium beijerinckii (strain ATCC 51743 / NCIMB 8052) (Clostridium acetobutylicum).